The following is a 199-amino-acid chain: Small ribosomal subunit protein uS5 (199 aa).

A disordered region spans residues 1–28; it reads MARTPNTDRRQRGGDDQRNRSPRSDERD. The 64-residue stretch at 31 to 94 folds into the S5 DRBM domain; the sequence is FLDKLVHINR…DQAKRTMIKV (64 aa).

Belongs to the universal ribosomal protein uS5 family. Part of the 30S ribosomal subunit. Contacts proteins S4 and S8.

With S4 and S12 plays an important role in translational accuracy. In terms of biological role, located at the back of the 30S subunit body where it stabilizes the conformation of the head with respect to the body. This Rhodospirillum rubrum (strain ATCC 11170 / ATH 1.1.1 / DSM 467 / LMG 4362 / NCIMB 8255 / S1) protein is Small ribosomal subunit protein uS5.